The primary structure comprises 1181 residues: Katanin p80 WD40 repeat-containing subunit B1 homolog KTN80.2 (1181 aa).

WD repeat units follow at residues 13–53 (AHSA…SLMS), 56–95 (GHTSAVDSVAFDSAEVLVLAGASSGVIKLWDVEEAKMVRA), 98–137 (GHRSNCSAVEFHPFGEFLASGSSDANLKIWDIRKKGCIQT), 140–181 (GHSR…HEFK), 183–221 (HEGPIRSLDFHPLEFLLATGSADRTVKFWDLETFELIGS), 224–264 (PEAT…DGVD), and 266–303 (GWSTLGDLCISEGKLLGCSYYQNSVGIWVSDISQIEPY). The short motif at 114–130 (FLASGSSDANLKIWDIR) is the DWD box element. Disordered stretches follow at residues 361–383 (AHKSGSLSTPATSTGQAGDNKSL), 503–597 (KPPR…ESKS), 702–739 (TSMATDTPPVTSTRPDRTSATNLTSDVSGVTSKRQTRT), 754–869 (KMKS…VIST), and 988–1008 (TKTQQSSDILTQKEEPQISGR). Polar residues-rich tracts occupy residues 365-379 (GSLSTPATSTGQAGD) and 509-526 (RSPSTKYNEARWATSTDS). 2 stretches are compositionally biased toward basic and acidic residues: residues 530–553 (DSKKNGLESSRDMDLPTGLRDDRG) and 569–585 (RSERVLSPEKAGDELKS). Composition is skewed to polar residues over residues 703 to 739 (SMATDTPPVTSTRPDRTSATNLTSDVSGVTSKRQTRT), 754 to 791 (KMKSDEPSITSTWPDRTSATDLTSDVSGVISSRQTRTS), 822 to 841 (SATNLTSDESPVTSTRQAKT), and 850 to 859 (ILNQRQTTNM). A compositionally biased stretch (basic and acidic residues) spans 998-1008 (TQKEEPQISGR).

It belongs to the WD repeat KATNB1 family. As to quaternary structure, component of KTN80-KTN1 complexes composed of a hexamer of KTN1-KTN80 heterodimers that sense microtubule (MT) geometry to confer precise MT severing. Interacts directly with AAA1/KTN1. Interacts with subunits of the CUL4-based E3 ligase complex DDB1A and DDB1B. As to expression, expressed at low levels in siliques, flowers, leaves, stems and roots.

The protein localises to the cytoplasm. It localises to the cytoskeleton. Its function is as follows. May participate in a complex which severs microtubules in an ATP-dependent manner. Microtubule severing may promote rapid reorganization of cellular microtubule arrays. Confers precision to microtubule (MT) severing by specific targeting of KTN1 to MT cleavage sites such as crossover or branching nucleation sites. Together with other KTN80s, regulates cell elongation by modulating MT organization. Negative regulator of abscisic acid (ABA) responses. May function as a substrate receptor for cullin-RING ubiquitin ligase 4 complexes (CRL4), a family of E3 ligases involved in protein degradation. In Arabidopsis thaliana (Mouse-ear cress), this protein is Katanin p80 WD40 repeat-containing subunit B1 homolog KTN80.2.